A 550-amino-acid chain; its full sequence is Tyrosine-protein phosphatase 1 (550 aa).

Positions 260 to 539 (LYQKFLRLQS…KYVYDLIDSL (280 aa)) constitute a Tyrosine-protein phosphatase domain. Residues Ser318 and Ser320 each carry the phosphoserine modification. The Phosphocysteine intermediate role is filled by Cys470.

It belongs to the protein-tyrosine phosphatase family. Non-receptor class subfamily.

Its subcellular location is the cytoplasm. It catalyses the reaction O-phospho-L-tyrosyl-[protein] + H2O = L-tyrosyl-[protein] + phosphate. Plays a role in inhibiting the onset of mitosis. Dephosphorylates sty1/spc1 and wis1/spc2/sty2. The chain is Tyrosine-protein phosphatase 1 (pyp1) from Schizosaccharomyces pombe (strain 972 / ATCC 24843) (Fission yeast).